Here is a 285-residue protein sequence, read N- to C-terminus: Tryptophan synthase alpha chain (285 aa).

Residues Glu53 and Asp64 each act as proton acceptor in the active site.

The protein belongs to the TrpA family. As to quaternary structure, tetramer of two alpha and two beta chains.

The catalysed reaction is (1S,2R)-1-C-(indol-3-yl)glycerol 3-phosphate + L-serine = D-glyceraldehyde 3-phosphate + L-tryptophan + H2O. Its pathway is amino-acid biosynthesis; L-tryptophan biosynthesis; L-tryptophan from chorismate: step 5/5. In terms of biological role, the alpha subunit is responsible for the aldol cleavage of indoleglycerol phosphate to indole and glyceraldehyde 3-phosphate. This chain is Tryptophan synthase alpha chain, found in Bordetella parapertussis (strain 12822 / ATCC BAA-587 / NCTC 13253).